The sequence spans 103 residues: Gene 56 protein (103 aa).

Positions 9–103 (WDGAHVRTLF…DYYTASETGL (95 aa)) constitute a Glutaredoxin domain.

The chain is Gene 56 protein (56) from Mycobacterium phage L5 (Mycobacteriophage L5).